The primary structure comprises 250 residues: uncharacterized protein (250 aa).

The protein to Synechocystis PCC 6803 sll0249.

This is an uncharacterized protein from Nostoc sp. (strain PCC 7120 / SAG 25.82 / UTEX 2576).